We begin with the raw amino-acid sequence, 331 residues long: Tagatose 1,6-diphosphate aldolase 2 (331 aa).

Belongs to the aldolase LacD family.

The catalysed reaction is D-tagatofuranose 1,6-bisphosphate = D-glyceraldehyde 3-phosphate + dihydroxyacetone phosphate. The protein operates within carbohydrate metabolism; D-tagatose 6-phosphate degradation; D-glyceraldehyde 3-phosphate and glycerone phosphate from D-tagatose 6-phosphate: step 2/2. In Enterococcus faecalis (strain ATCC 700802 / V583), this protein is Tagatose 1,6-diphosphate aldolase 2 (lacD2).